Here is a 550-residue protein sequence, read N- to C-terminus: Small ribosomal subunit protein uS3m (550 aa).

The disordered stretch occupies residues 112–133 (NDDTEEERNEVGGRGAGKRVES).

It belongs to the universal ribosomal protein uS3 family.

The protein localises to the mitochondrion. In Oenothera berteroana (Bertero's evening primrose), this protein is Small ribosomal subunit protein uS3m (RPS3).